A 395-amino-acid chain; its full sequence is Methylthioribose-1-phosphate isomerase (395 aa).

Catalysis depends on Asp258, which acts as the Proton donor.

Belongs to the eIF-2B alpha/beta/delta subunits family. MtnA subfamily.

It localises to the cytoplasm. Its subcellular location is the nucleus. The catalysed reaction is 5-(methylsulfanyl)-alpha-D-ribose 1-phosphate = 5-(methylsulfanyl)-D-ribulose 1-phosphate. Its pathway is amino-acid biosynthesis; L-methionine biosynthesis via salvage pathway; L-methionine from S-methyl-5-thio-alpha-D-ribose 1-phosphate: step 1/6. Catalyzes the interconversion of methylthioribose-1-phosphate (MTR-1-P) into methylthioribulose-1-phosphate (MTRu-1-P). This Podospora anserina (strain S / ATCC MYA-4624 / DSM 980 / FGSC 10383) (Pleurage anserina) protein is Methylthioribose-1-phosphate isomerase.